A 448-amino-acid polypeptide reads, in one-letter code: Serine/threonine-protein phosphatase 2A regulatory subunit B'' subunit gamma (448 aa).

2 consecutive EF-hand domains span residues 268–303 (PSALRVYGQYLNLDKDHNGMLSKEELSRYGTGTLTC) and 336–371 (KEPAALQYIFKLLDIENKGSLNVFSLNFFFRAIQEQ). Positions 281, 283, 285, 287, and 292 each coordinate Ca(2+).

Its subcellular location is the nucleus. It is found in the cytoplasm. In terms of biological role, possible role in the regulation of cell death. This Xenopus tropicalis (Western clawed frog) protein is Serine/threonine-protein phosphatase 2A regulatory subunit B'' subunit gamma (ppp2r3c).